We begin with the raw amino-acid sequence, 314 residues long: Malate dehydrogenase (314 aa).

NAD(+)-binding positions include glycine 12–glycine 17 and aspartate 36. Substrate-binding residues include arginine 87 and arginine 93. NAD(+) contacts are provided by residues asparagine 100 and leucine 123–asparagine 125. Asparagine 125 is a binding site for substrate. Serine 149 bears the Phosphoserine mark. Arginine 156 is a substrate binding site. The active-site Proton acceptor is the histidine 180.

Belongs to the LDH/MDH superfamily. MDH type 3 family.

The catalysed reaction is (S)-malate + NAD(+) = oxaloacetate + NADH + H(+). Functionally, catalyzes the reversible oxidation of malate to oxaloacetate. This is Malate dehydrogenase from Halalkalibacterium halodurans (strain ATCC BAA-125 / DSM 18197 / FERM 7344 / JCM 9153 / C-125) (Bacillus halodurans).